We begin with the raw amino-acid sequence, 484 residues long: Trigger factor (484 aa).

Residues 162–243 (GDFISIDLSA…VKSVKERELP (82 aa)) form the PPIase FKBP-type domain. The interval 427-484 (DGNTIDTSEFFGKPPENDVTDLLDDDADGDAGVDADGDTENSAEPADADSADAAQGAG) is disordered. The segment covering 444-476 (DVTDLLDDDADGDAGVDADGDTENSAEPADADS) has biased composition (acidic residues).

It belongs to the FKBP-type PPIase family. Tig subfamily.

The protein resides in the cytoplasm. It catalyses the reaction [protein]-peptidylproline (omega=180) = [protein]-peptidylproline (omega=0). Its function is as follows. Involved in protein export. Acts as a chaperone by maintaining the newly synthesized protein in an open conformation. Functions as a peptidyl-prolyl cis-trans isomerase. The protein is Trigger factor of Mycobacterium marinum (strain ATCC BAA-535 / M).